We begin with the raw amino-acid sequence, 558 residues long: Dihydroxy-acid dehydratase (558 aa).

Asp78 serves as a coordination point for Mg(2+). Cys119 contacts [2Fe-2S] cluster. The Mg(2+) site is built by Asp120 and Lys121. An N6-carboxylysine modification is found at Lys121. Residue Cys192 participates in [2Fe-2S] cluster binding. Position 446 (Glu446) interacts with Mg(2+). The active-site Proton acceptor is the Ser472.

The protein belongs to the IlvD/Edd family. Homodimer. [2Fe-2S] cluster serves as cofactor. The cofactor is Mg(2+).

The enzyme catalyses (2R)-2,3-dihydroxy-3-methylbutanoate = 3-methyl-2-oxobutanoate + H2O. The catalysed reaction is (2R,3R)-2,3-dihydroxy-3-methylpentanoate = (S)-3-methyl-2-oxopentanoate + H2O. Its pathway is amino-acid biosynthesis; L-isoleucine biosynthesis; L-isoleucine from 2-oxobutanoate: step 3/4. It functions in the pathway amino-acid biosynthesis; L-valine biosynthesis; L-valine from pyruvate: step 3/4. Its function is as follows. Functions in the biosynthesis of branched-chain amino acids. Catalyzes the dehydration of (2R,3R)-2,3-dihydroxy-3-methylpentanoate (2,3-dihydroxy-3-methylvalerate) into 2-oxo-3-methylpentanoate (2-oxo-3-methylvalerate) and of (2R)-2,3-dihydroxy-3-methylbutanoate (2,3-dihydroxyisovalerate) into 2-oxo-3-methylbutanoate (2-oxoisovalerate), the penultimate precursor to L-isoleucine and L-valine, respectively. The polypeptide is Dihydroxy-acid dehydratase (Campylobacter jejuni subsp. jejuni serotype O:23/36 (strain 81-176)).